The following is a 1338-amino-acid chain: MSPVLHFYVRPSGHEGAAPGHTRRKLQGKLPELQGVETELCYNVNWTAEALPSAEETKKLMWLFGCPLLLDDVARESWLLPGSNDLLLEVGPRLNFSTPTSTNIVSVCRATGLGPVDRVETTRRYRLSFAHPPSAEVEAIALATLHDRMTEQHFPHPIQSFSPESMPEPLNGPINILGEGRLALEKANQELGLALDSWDLDFYTKRFQELQRNPSTVEAFDLAQSNSEHSRHWFFKGQLHVDGQKLVHSLFESIMSTQESSNPNNVLKFCDNSSAIQGKEVRFLRPEDPTRPSRFQQQQGLRHVVFTAETHNFPTGVCPFSGATTGTGGRIRDVQCTGRGAHVVAGTAGYCFGNLHIPGYNLPWEDPSFQYPGNFARPLEVAIEASNGASDYGNKFGEPVLAGFARSLGLQLPDGQRREWIKPIMFSGGIGSMEADHISKEAPEPGMEVVKVGGPVYRIGVGGGAASSVQVQGDNTSDLDFGAVQRGDPEMEQKMNRVIRACVEAPKGNPICSLHDQGAGGNGNVLKELSDPAGAIIYTSRFQLGDPTLNALEIWGAEYQESNALLLRSPNRDFLTHVSARERCPACFVGTITGDRRIVLVDDRECPVRRNGQGDAPPTPLPTPVDLELEWVLGKMPRKEFFLQRKPPMLQPLALPPGLSVHQALERVLRLPAVASKRYLTNKVDRSVGGLVAQQQCVGPLQTPLADVAVVALSHEELIGAATALGEQPVKSLLDPKVAARLAVAEALTNLVFALVTDLRDVKCSGNWMWAAKLPGEGAALADACEAMVAVMAALGVAVDGGKDSLSMAARVGTETVRAPGSLVISAYAVCPDITATVTPDLKHPEGRGHLLYVALSPGQHRLGGTALAQCFSQLGEHPPDLDLPENLVRAFSITQGLLKDRLLCSGHDVSDGGLVTCLLEMAFAGNCGLQVDVPVPRVDVLSVLFAEEPGLVLEVQEPDLAQVLKRYRDAGLHCLELGHTGEAGPHAMVRVSVNGAVVLEEPVGELRALWEETSFQLDRLQAEPRCVAEEERGLRERMGPSYCLPPTFPKASVPREPGGPSPRVAILREEGSNGDREMADAFHLAGFEVWDVTMQDLCSGAIGLDTFRGVAFVGGFSYADVLGSAKGWAAAVTFHPRAGAELRRFRKRPDTFSLGVCNGCQLLALLGWVGGDPNEDAAEMGPDSQPARPGLLLRHNLSGRYESRWASVRVGPGPALMLRGMEGAVLPVWSAHGEGYVAFSSPELQAQIEARGLAPLHWADDDGNPTEQYPLNPNGSPGGVAGICSCDGRHLAVMPHPERAVRPWQWAWRPPPFDTLTTSPWLQLFINARNWTLEGSC.

The residue at position 215 (S215) is a Phosphoserine. Residues 322–333 and 402–404 contribute to the ATP site; these read GATTGTGGRIRD and AGF. At S569 the chain carries Phosphoserine. Residues T619 and T623 each carry the phosphothreonine modification. Residue A706 coordinates ATP. Mg(2+)-binding residues include D707, E746, N750, and D909. S911 is an ATP binding site. A Glutamine amidotransferase type-1 domain is found at 1064-1302; sequence RVAILREEGS…AVMPHPERAV (239 aa). The active-site Nucleophile is C1158. Active-site residues include H1297 and E1299.

This sequence in the N-terminal section; belongs to the FGAMS family.

It localises to the cytoplasm. The catalysed reaction is N(2)-formyl-N(1)-(5-phospho-beta-D-ribosyl)glycinamide + L-glutamine + ATP + H2O = 2-formamido-N(1)-(5-O-phospho-beta-D-ribosyl)acetamidine + L-glutamate + ADP + phosphate + H(+). It participates in purine metabolism; IMP biosynthesis via de novo pathway; 5-amino-1-(5-phospho-D-ribosyl)imidazole from N(2)-formyl-N(1)-(5-phospho-D-ribosyl)glycinamide: step 1/2. In terms of biological role, phosphoribosylformylglycinamidine synthase involved in the purines biosynthetic pathway. Catalyzes the ATP-dependent conversion of formylglycinamide ribonucleotide (FGAR) and glutamine to yield formylglycinamidine ribonucleotide (FGAM) and glutamate. This chain is Phosphoribosylformylglycinamidine synthase (PFAS), found in Homo sapiens (Human).